Here is a 332-residue protein sequence, read N- to C-terminus: L-lactate dehydrogenase A chain (332 aa).

Residues 29 to 57 (GAVG…VEDK) and Arg-99 each bind NAD(+). Substrate-binding residues include Arg-106, Asn-138, and Arg-169. Asn-138 is a binding site for NAD(+). His-193 acts as the Proton acceptor in catalysis. Thr-248 contributes to the substrate binding site.

It belongs to the LDH/MDH superfamily. LDH family. In terms of assembly, homotetramer.

It is found in the cytoplasm. It carries out the reaction (S)-lactate + NAD(+) = pyruvate + NADH + H(+). The protein operates within fermentation; pyruvate fermentation to lactate; (S)-lactate from pyruvate: step 1/1. Interconverts simultaneously and stereospecifically pyruvate and lactate with concomitant interconversion of NADH and NAD(+). This chain is L-lactate dehydrogenase A chain (LDHA), found in Gallus gallus (Chicken).